We begin with the raw amino-acid sequence, 101 residues long: Ubiquitin-related modifier 1 (101 aa).

Residue Gly-101 is modified to 1-thioglycine. Gly-101 participates in a covalent cross-link: Glycyl lysine isopeptide (Gly-Lys) (interchain with K-? in acceptor proteins).

This sequence belongs to the URM1 family. In terms of processing, C-terminal thiocarboxylation occurs in 2 steps, it is first acyl-adenylated (-COAMP) via the hesA/moeB/thiF part of UBA4, then thiocarboxylated (-COSH) via the rhodanese domain of UBA4.

It is found in the cytoplasm. It participates in tRNA modification; 5-methoxycarbonylmethyl-2-thiouridine-tRNA biosynthesis. Its function is as follows. Acts as a sulfur carrier required for 2-thiolation of mcm(5)S(2)U at tRNA wobble positions of cytosolic tRNA(Lys), tRNA(Glu) and tRNA(Gln). Serves as sulfur donor in tRNA 2-thiolation reaction by being thiocarboxylated (-COSH) at its C-terminus by the MOCS3 homolog UBA4. The sulfur is then transferred to tRNA to form 2-thiolation of mcm(5)S(2)U. Prior mcm(5) tRNA modification by the elongator complex is required for 2-thiolation. Also acts as a ubiquitin-like protein (UBL) that is covalently conjugated via an isopeptide bond to lysine residues of target proteins such as AHP1. The thiocarboxylated form serves as substrate for conjugation and oxidative stress specifically induces the formation of UBL-protein conjugates. The sequence is that of Ubiquitin-related modifier 1 from Scheffersomyces stipitis (strain ATCC 58785 / CBS 6054 / NBRC 10063 / NRRL Y-11545) (Yeast).